The primary structure comprises 114 residues: uncharacterized protein (114 aa).

Cys10 is a catalytic residue.

This sequence belongs to the ArsC family.

This is an uncharacterized protein from Haemophilus influenzae (strain ATCC 51907 / DSM 11121 / KW20 / Rd).